The following is a 282-amino-acid chain: Large ribosomal subunit protein uL2 (282 aa).

The tract at residues 215–282 (RHKGIRPTVR…IIRSRKETKK (68 aa)) is disordered. The segment covering 263-282 (RNPKKPSTKLIIRSRKETKK) has biased composition (basic residues).

It belongs to the universal ribosomal protein uL2 family. As to quaternary structure, part of the 50S ribosomal subunit. Forms a bridge to the 30S subunit in the 70S ribosome.

In terms of biological role, one of the primary rRNA binding proteins. Required for association of the 30S and 50S subunits to form the 70S ribosome, for tRNA binding and peptide bond formation. It has been suggested to have peptidyltransferase activity; this is somewhat controversial. Makes several contacts with the 16S rRNA in the 70S ribosome. The chain is Large ribosomal subunit protein uL2 from Mesomycoplasma hyopneumoniae (strain 7448) (Mycoplasma hyopneumoniae).